The chain runs to 150 residues: uncharacterized protein (150 aa).

It localises to the plastid. Its subcellular location is the chloroplast. This is an uncharacterized protein from Pyropia yezoensis (Susabi-nori).